A 278-amino-acid chain; its full sequence is Hydroxyethylthiazole kinase (278 aa).

Position 46 (Met46) interacts with substrate. Residues Arg122 and Thr168 each coordinate ATP. Position 195 (Gly195) interacts with substrate.

Belongs to the Thz kinase family. Mg(2+) serves as cofactor.

The enzyme catalyses 5-(2-hydroxyethyl)-4-methylthiazole + ATP = 4-methyl-5-(2-phosphooxyethyl)-thiazole + ADP + H(+). It participates in cofactor biosynthesis; thiamine diphosphate biosynthesis; 4-methyl-5-(2-phosphoethyl)-thiazole from 5-(2-hydroxyethyl)-4-methylthiazole: step 1/1. In terms of biological role, catalyzes the phosphorylation of the hydroxyl group of 4-methyl-5-beta-hydroxyethylthiazole (THZ). This chain is Hydroxyethylthiazole kinase, found in Chloroflexus aggregans (strain MD-66 / DSM 9485).